Consider the following 261-residue polypeptide: Uridylate kinase (261 aa).

The disordered stretch occupies residues 1-23 (MTEPDVAGAPASKPEPASTGAAS). 36–39 (KLGG) contacts ATP. A UMP-binding site is contributed by G77. ATP contacts are provided by G78 and R82. Residues D97 and 158–165 (MGLPYFST) each bind UMP. Residues F191 and D194 each coordinate ATP.

This sequence belongs to the UMP kinase family. In terms of assembly, homohexamer.

The protein resides in the cytoplasm. It catalyses the reaction UMP + ATP = UDP + ADP. It participates in pyrimidine metabolism; CTP biosynthesis via de novo pathway; UDP from UMP (UMPK route): step 1/1. With respect to regulation, inhibited by UTP. Its function is as follows. Catalyzes the reversible phosphorylation of UMP to UDP. The chain is Uridylate kinase from Mycobacterium tuberculosis (strain ATCC 25177 / H37Ra).